Consider the following 176-residue polypeptide: Cathelicidin-2 (176 aa).

The first 29 residues, 1–29, serve as a signal peptide directing secretion; the sequence is METQRASLSLGRCSLWLLLLGLVLPSASA. Gln30 is subject to Pyrrolidone carboxylic acid. The propeptide occupies 30-130; that stretch reads QALSYREAVL…DINCNELQSV (101 aa). 2 disulfide bridges follow: Cys85-Cys96 and Cys107-Cys124. The tract at residues 157 to 176 is disordered; it reads IFPPIRPPFRPPLGPFPGRR. Pro173 carries the post-translational modification Proline amide. Residues 174 to 176 constitute a propeptide, removed in mature form; that stretch reads GRR.

Belongs to the cathelicidin family. In terms of processing, elastase is responsible for its maturation. Large granules of neutrophils.

It is found in the secreted. In terms of biological role, exerts, in vitro, a potent antimicrobial activity. Probably due to an impairment of the function of the respiratory chain and of energy-dependent activities in the inner membrane of susceptible microorganisms. The chain is Cathelicidin-2 (CATHL2) from Bos taurus (Bovine).